The primary structure comprises 140 residues: Large ribosomal subunit protein bL17 (140 aa).

The protein belongs to the bacterial ribosomal protein bL17 family. As to quaternary structure, part of the 50S ribosomal subunit. Contacts protein L32.

The sequence is that of Large ribosomal subunit protein bL17 from Rhizobium etli (strain CIAT 652).